Reading from the N-terminus, the 2293-residue chain is Protein Ycf2 B (2293 aa).

An ATP-binding site is contributed by 1647–1654 (GSIGTGRS).

This sequence belongs to the Ycf2 family.

It localises to the plastid. The protein localises to the chloroplast stroma. Its function is as follows. Probable ATPase of unknown function. Its presence in a non-photosynthetic plant (Epifagus virginiana) and experiments in tobacco indicate that it has an essential function which is probably not related to photosynthesis. This is Protein Ycf2 B from Crucihimalaya wallichii (Rock-cress).